The primary structure comprises 671 residues: DNA ligase (671 aa).

NAD(+) contacts are provided by residues 31-35 (DAEYD), 80-81 (SL), and Glu110. The active-site N6-AMP-lysine intermediate is the Lys112. The NAD(+) site is built by Arg133, Glu167, Lys283, and Lys307. Zn(2+) is bound by residues Cys401, Cys404, Cys419, and Cys424. The 85-residue stretch at 587–671 (EEELVFAGKT…YLPDEGGLNE (85 aa)) folds into the BRCT domain.

The protein belongs to the NAD-dependent DNA ligase family. LigA subfamily. It depends on Mg(2+) as a cofactor. Mn(2+) serves as cofactor.

The enzyme catalyses NAD(+) + (deoxyribonucleotide)n-3'-hydroxyl + 5'-phospho-(deoxyribonucleotide)m = (deoxyribonucleotide)n+m + AMP + beta-nicotinamide D-nucleotide.. DNA ligase that catalyzes the formation of phosphodiester linkages between 5'-phosphoryl and 3'-hydroxyl groups in double-stranded DNA using NAD as a coenzyme and as the energy source for the reaction. It is essential for DNA replication and repair of damaged DNA. This is DNA ligase from Listeria innocua serovar 6a (strain ATCC BAA-680 / CLIP 11262).